The following is an 89-amino-acid chain: Small ribosomal subunit protein uS15 (89 aa).

This sequence belongs to the universal ribosomal protein uS15 family. As to quaternary structure, part of the 30S ribosomal subunit. Forms a bridge to the 50S subunit in the 70S ribosome, contacting the 23S rRNA.

In terms of biological role, one of the primary rRNA binding proteins, it binds directly to 16S rRNA where it helps nucleate assembly of the platform of the 30S subunit by binding and bridging several RNA helices of the 16S rRNA. Its function is as follows. Forms an intersubunit bridge (bridge B4) with the 23S rRNA of the 50S subunit in the ribosome. The polypeptide is Small ribosomal subunit protein uS15 (Staphylococcus saprophyticus subsp. saprophyticus (strain ATCC 15305 / DSM 20229 / NCIMB 8711 / NCTC 7292 / S-41)).